The following is a 206-amino-acid chain: High frequency lysogenization protein HflD homolog (206 aa).

Belongs to the HflD family.

It localises to the cytoplasm. Its subcellular location is the cell inner membrane. The chain is High frequency lysogenization protein HflD homolog from Pseudomonas paraeruginosa (strain DSM 24068 / PA7) (Pseudomonas aeruginosa (strain PA7)).